Reading from the N-terminus, the 157-residue chain is MVYNITSSNQYQYFAAMWAEPTAMLNQCVSALSQSYQTQAARDTVRQQFSNLLSAIVTPNQRFPEAGYRVYINSAVLKPLYESLMKSFDTRNRIIETEEESRPSASEVANATQRVDDATVAIRSQIQLLLNELSNGHGLMNRAEFEVLLPWATAPAT.

Belongs to the virgaviridae capsid protein family.

Its subcellular location is the virion. Its function is as follows. Capsid protein self-assembles to form rod-shaped virions about 18 nm in diameter with a central canal enclosing the viral genomic RNA. The protein is Capsid protein (CP) of Brassica napus (Rape).